Reading from the N-terminus, the 184-residue chain is Peptidyl-tRNA hydrolase (184 aa).

TRNA is bound at residue Y14. H19 functions as the Proton acceptor in the catalytic mechanism. Residues F64, N66, and N112 each contribute to the tRNA site.

This sequence belongs to the PTH family. In terms of assembly, monomer.

It is found in the cytoplasm. It catalyses the reaction an N-acyl-L-alpha-aminoacyl-tRNA + H2O = an N-acyl-L-amino acid + a tRNA + H(+). Its function is as follows. Hydrolyzes ribosome-free peptidyl-tRNAs (with 1 or more amino acids incorporated), which drop off the ribosome during protein synthesis, or as a result of ribosome stalling. Functionally, catalyzes the release of premature peptidyl moieties from peptidyl-tRNA molecules trapped in stalled 50S ribosomal subunits, and thus maintains levels of free tRNAs and 50S ribosomes. The chain is Peptidyl-tRNA hydrolase from Listeria welshimeri serovar 6b (strain ATCC 35897 / DSM 20650 / CCUG 15529 / CIP 8149 / NCTC 11857 / SLCC 5334 / V8).